A 223-amino-acid chain; its full sequence is Killer cell lectin-like receptor subfamily B member 1B allele B (223 aa).

The Cytoplasmic portion of the chain corresponds to 1–45; that stretch reads MDTAVVYADLHLARTGEPKHKSPPSLSPDTCQCPRWHRLALKLGC. An ITIM motif motif is present at residues 5 to 10; that stretch reads VVYADL. Residues 31–34 carry the LCK-binding motif motif; it reads CQCP. The chain crosses the membrane as a helical; Signal-anchor for type II membrane protein span at residues 46–66; that stretch reads ACLILLVLSVIGLGVLVLTLL. The Extracellular segment spans residues 67-223; sequence QKPLIQNSPA…LKCECMCNGS (157 aa). A C-type lectin domain is found at 101–211; sequence HQDKCFHVSQ…CDSDNLWICQ (111 aa). 2 disulfide bridges follow: Cys122–Cys210 and Cys189–Cys202.

In terms of assembly, homodimer; disulfide-linked. Interacts with tyrosine kinase LCK. Binds PTPN6/SHP-1 in a phosphorylation-dependent manner. Expressed in a subset of natural killer cells.

Its subcellular location is the membrane. In terms of biological role, receptor for CLEC2D/OCIL. Ligand-binding contributes to inhibition of cytotoxic natural killer (NK) cells. May mediate MHC class I-independent 'missing-self' recognition of allografts, tumor cells and virus-infected cells. The protein is Killer cell lectin-like receptor subfamily B member 1B allele B of Rattus norvegicus (Rat).